Consider the following 1123-residue polypeptide: Phytochrome A-2 (1123 aa).

Residues 1–14 (MSTSRPSQSSSNSG) show a composition bias toward low complexity. Residues 1–21 (MSTSRPSQSSSNSGRSRRSAR) are disordered. One can recognise a GAF domain in the interval 267–449 (LHYPATDIPQ…LVKCDGAALI (183 aa)). Cys-323 is a binding site for phytochromobilin. Residues 616–686 (VTSEIVRLIE…KMLNLALLGE (71 aa)) form the PAS 1 domain. The 57-residue stretch at 689–745 (KNVQFEIKTHGSKMDSGPISLVVNACASRDLRDNVVGVCFVAHDITAQKNVMDKFTR) folds into the PAC domain. The 75-residue stretch at 749 to 823 (DYKAIVQNRN…EAFVNLGVVL (75 aa)) folds into the PAS 2 domain. Residues 900–1119 (YMKRQIRNPL…ILSAELAAAH (220 aa)) enclose the Histidine kinase domain.

It belongs to the phytochrome family. As to quaternary structure, heterodimer between subunit A and subunit B. Contains one covalently linked phytochromobilin chromophore.

Functionally, regulatory photoreceptor which exists in two forms that are reversibly interconvertible by light: the Pr form that absorbs maximally in the red region of the spectrum and the Pfr form that absorbs maximally in the far-red region. Photoconversion of Pr to Pfr induces an array of morphogenic responses, whereas reconversion of Pfr to Pr cancels the induction of those responses. Pfr controls the expression of a number of nuclear genes including those encoding the small subunit of ribulose-bisphosphate carboxylase, chlorophyll A/B binding protein, protochlorophyllide reductase, rRNA, etc. It also controls the expression of its own gene(s) in a negative feedback fashion. This chain is Phytochrome A-2, found in Glycine max (Soybean).